A 264-amino-acid polypeptide reads, in one-letter code: 3'-5' ssDNA/RNA exonuclease TatD (264 aa).

The a divalent metal cation site is built by glutamate 92, histidine 128, and histidine 153.

This sequence belongs to the metallo-dependent hydrolases superfamily. TatD-type hydrolase family. TatD subfamily. In terms of assembly, monomer. Mg(2+) serves as cofactor.

Its subcellular location is the cytoplasm. Functionally, 3'-5' exonuclease that prefers single-stranded DNA and RNA. May play a role in the H(2)O(2)-induced DNA damage repair. The chain is 3'-5' ssDNA/RNA exonuclease TatD from Dickeya dadantii (strain 3937) (Erwinia chrysanthemi (strain 3937)).